Reading from the N-terminus, the 227-residue chain is Testis expressed protein 56 (227 aa).

In terms of tissue distribution, expressed predominantly in the testis.

The protein is Testis expressed protein 56 of Mus musculus (Mouse).